The sequence spans 558 residues: T-complex protein 1 subunit eta (558 aa).

The segment at 524–558 (VRNPKSEQPKAPPGGLRRGGPQGMAGLAKNARLGK) is disordered.

This sequence belongs to the TCP-1 chaperonin family. In terms of assembly, heterooligomeric complex of about 850 to 900 kDa that forms two stacked rings, 12 to 16 nm in diameter.

The protein localises to the cytoplasm. In terms of biological role, molecular chaperone; assists the folding of proteins upon ATP hydrolysis. Known to play a role, in vitro, in the folding of actin and tubulin. The sequence is that of T-complex protein 1 subunit eta from Tetrahymena pyriformis.